Reading from the N-terminus, the 374-residue chain is Anhydro-N-acetylmuramic acid kinase (374 aa).

An ATP-binding site is contributed by 12–19; sequence GTSLDGVD.

The protein belongs to the anhydro-N-acetylmuramic acid kinase family.

It catalyses the reaction 1,6-anhydro-N-acetyl-beta-muramate + ATP + H2O = N-acetyl-D-muramate 6-phosphate + ADP + H(+). It participates in amino-sugar metabolism; 1,6-anhydro-N-acetylmuramate degradation. Its pathway is cell wall biogenesis; peptidoglycan recycling. Functionally, catalyzes the specific phosphorylation of 1,6-anhydro-N-acetylmuramic acid (anhMurNAc) with the simultaneous cleavage of the 1,6-anhydro ring, generating MurNAc-6-P. Is required for the utilization of anhMurNAc either imported from the medium or derived from its own cell wall murein, and thus plays a role in cell wall recycling. The polypeptide is Anhydro-N-acetylmuramic acid kinase (Escherichia fergusonii (strain ATCC 35469 / DSM 13698 / CCUG 18766 / IAM 14443 / JCM 21226 / LMG 7866 / NBRC 102419 / NCTC 12128 / CDC 0568-73)).